The primary structure comprises 700 residues: Peroxisomal acyl-coenzyme A oxidase 3 (700 aa).

Residue alanine 2 is modified to N-acetylalanine. Threonine 281 carries the post-translational modification Phosphothreonine. Positions 698–700 match the Microbody targeting signal motif; it reads SKL.

Belongs to the acyl-CoA oxidase family. The cofactor is FAD.

It localises to the peroxisome. The catalysed reaction is a 2,3-saturated acyl-CoA + O2 = a (2E)-enoyl-CoA + H2O2. The enzyme catalyses (2S)-pristanoyl-CoA + O2 = (2E)-pristenoyl-CoA + H2O2. It carries out the reaction tetracosanoyl-CoA + O2 = (2E)-tetracosenoyl-CoA + H2O2. It catalyses the reaction hexadecanoyl-CoA + O2 = (2E)-hexadecenoyl-CoA + H2O2. The catalysed reaction is hexadecanedioyl-CoA + O2 = (2E)-hexadecenedioyl-CoA + H2O2. It functions in the pathway lipid metabolism; peroxisomal fatty acid beta-oxidation. Its function is as follows. Oxidizes the CoA-esters of 2-methyl-branched fatty acids. The protein is Peroxisomal acyl-coenzyme A oxidase 3 (ACOX3) of Homo sapiens (Human).